A 490-amino-acid polypeptide reads, in one-letter code: Metalloreductase STEAP2 (490 aa).

NADP(+) contacts are provided by residues 38 to 41, 60 to 61, 93 to 100, asparagine 118, and alanine 151; these read SGDF, SR, and IHREHYTS. FAD contacts are provided by tryptophan 152 and aspartate 160. Residues 208 to 228 form a helical membrane-spanning segment; that stretch reads LFTLWRGPVVVAISLATFFFL. Tyrosine 229 contacts Fe(3+). A helical transmembrane segment spans residues 259 to 279; sequence LPIVAITLLSLVYLAGLLAAA. The region spanning 259–407 is the Ferric oxidoreductase domain; it reads LPIVAITLLS…LGYVALLIST (149 aa). 2 residues coordinate FAD: glutamine 281 and arginine 302. Helical transmembrane passes span 305-325, 359-379, 393-413, and 432-452; these read LGLL…CLPM, MYIS…VTSI, FIQS…VLIY, and FVLA…LFLP. Residue histidine 316 participates in heme b binding. Tyrosine 319 serves as a coordination point for Fe(3+). Serine 378 and glutamine 395 together coordinate FAD. Histidine 409 is a binding site for heme b. Serine 483 is subject to Phosphoserine.

This sequence belongs to the STEAP family. Requires FAD as cofactor. It depends on heme b as a cofactor. In terms of tissue distribution, expressed at high levels in prostate and at significantly lower levels in heart, brain, kidney, pancreas, and ovary.

It localises to the endosome membrane. Its subcellular location is the cell membrane. It catalyses the reaction 2 Fe(2+) + NADP(+) + H(+) = 2 Fe(3+) + NADPH. It carries out the reaction 2 Cu(+) + NADP(+) + H(+) = 2 Cu(2+) + NADPH. Functionally, integral membrane protein that functions as a NADPH-dependent ferric-chelate reductase, using NADPH from one side of the membrane to reduce a Fe(3+) chelate that is bound on the other side of the membrane. Mediates sequential transmembrane electron transfer from NADPH to FAD and onto heme, and finally to the Fe(3+) chelate. Can also reduce Cu(2+) to Cu(1+). The polypeptide is Metalloreductase STEAP2 (STEAP2) (Homo sapiens (Human)).